The chain runs to 446 residues: Glutamine synthetase (446 aa).

The region spanning 15–102 (RDIRFVRLWF…MFCDITMPDG (88 aa)) is the GS beta-grasp domain. The GS catalytic domain occupies 109 to 446 (PRHVLRRQLT…PYELRTYLSL (338 aa)). Residues E132 and E134 each coordinate Mg(2+). E184 serves as a coordination point for ATP. Residues E189 and E196 each coordinate Mg(2+). An L-glutamate-binding site is contributed by G241. H245 lines the Mg(2+) pocket. Residues 247–249 (HMS) and S249 contribute to the ATP site. Positions 298, 304, and 316 each coordinate L-glutamate. R316 and R321 together coordinate ATP. Position 336 (E336) interacts with Mg(2+). L-glutamate is bound at residue R338.

It belongs to the glutamine synthetase family. As to quaternary structure, oligomer of 12 subunits arranged in the form of two hexagons. In its feedback-inhibited form, interacts with TnrA in order to block its DNA-binding activity. Mg(2+) is required as a cofactor.

The protein localises to the cytoplasm. The catalysed reaction is L-glutamate + NH4(+) + ATP = L-glutamine + ADP + phosphate + H(+). Its activity is regulated as follows. Inhibited by glutamine. Its function is as follows. Glutamine synthetase (GS) is an unusual multitasking protein that functions as an enzyme, a transcription coregulator, and a chaperone in ammonium assimilation and in the regulation of genes involved in nitrogen metabolism. It catalyzes the ATP-dependent biosynthesis of glutamine from glutamate and ammonia. Feedback-inhibited GlnA also interacts with and regulates the activity of the transcriptional regulator TnrA. During nitrogen limitation, TnrA is in its DNA-binding active state and turns on the transcription of genes required for nitrogen assimilation. Under conditions of nitrogen excess, feedback-inhibited GlnA forms a stable complex with TnrA, which inhibits its DNA-binding activity. In contrast, feedback-inhibited GlnA acts as a chaperone to stabilize the DNA-binding activity of GlnR, which represses the transcription of nitrogen assimilation genes. In Mycobacterium bovis (strain ATCC BAA-935 / AF2122/97), this protein is Glutamine synthetase.